The chain runs to 1274 residues: Myosin-binding protein C, cardiac-type (1274 aa).

Position 1 is an N-acetylmethionine (M1). S47 is modified (phosphoserine). Residues 107 to 141 (APAPAEATGAPGEAPAPAAELGESAPSPKGSSSAA) are compositionally biased toward low complexity. The interval 107 to 153 (APAPAEATGAPGEAPAPAAELGESAPSPKGSSSAALNGPTPGAPDDP) is disordered. Positions 153-256 (PIGLFVMRPQ…FDCSNFNLTV (104 aa)) constitute an Ig-like C2-type 1 domain. Zn(2+) is bound by residues Q208, H210, E223, and H225. A phosphoserine; by PKA and PKC mark is found at S275, S284, and S304. Phosphoserine is present on residues S311 and S427. Ig-like C2-type domains are found at residues 362 to 452 (STAF…VKEP), 453 to 543 (PVLI…VQEK), 544 to 633 (KLEV…HFME), and 645 to 771 (PKIH…VIDV). The cysteines at positions 436 and 443 are disulfide-linked. A Phosphoserine modification is found at S550. T607 carries the post-translational modification Phosphothreonine. Fibronectin type-III domains are found at residues 774–870 (APAA…IGPP) and 872–967 (EPTH…VQEI). One can recognise an Ig-like C2-type 6 domain in the interval 971–1065 (PRLQLPRHLR…ATLVLQVVDK (95 aa)). The 96-residue stretch at 1068-1163 (PPQDLRVTDA…TKEPVFIPRP (96 aa)) folds into the Fibronectin type-III 3 domain. Residues 1181–1274 (PSFTQPLVNR…ECRLEVRVPQ (94 aa)) enclose the Ig-like C2-type 7 domain. R1241 carries the omega-N-methylarginine modification.

Belongs to the immunoglobulin superfamily. MyBP family. Post-translationally, substrate for phosphorylation by PKA and PKC. Reversible phosphorylation appears to modulate contraction. Polyubiquitinated.

Functionally, thick filament-associated protein located in the crossbridge region of vertebrate striated muscle a bands. In vitro it binds MHC, F-actin and native thin filaments, and modifies the activity of actin-activated myosin ATPase. It may modulate muscle contraction or may play a more structural role. This is Myosin-binding protein C, cardiac-type (MYBPC3) from Homo sapiens (Human).